The primary structure comprises 158 residues: NAD(P)H-quinone oxidoreductase subunit J, chloroplastic (158 aa).

This sequence belongs to the complex I 30 kDa subunit family. NDH is composed of at least 16 different subunits, 5 of which are encoded in the nucleus.

It localises to the plastid. The protein resides in the chloroplast thylakoid membrane. It carries out the reaction a plastoquinone + NADH + (n+1) H(+)(in) = a plastoquinol + NAD(+) + n H(+)(out). The enzyme catalyses a plastoquinone + NADPH + (n+1) H(+)(in) = a plastoquinol + NADP(+) + n H(+)(out). NDH shuttles electrons from NAD(P)H:plastoquinone, via FMN and iron-sulfur (Fe-S) centers, to quinones in the photosynthetic chain and possibly in a chloroplast respiratory chain. The immediate electron acceptor for the enzyme in this species is believed to be plastoquinone. Couples the redox reaction to proton translocation, and thus conserves the redox energy in a proton gradient. The chain is NAD(P)H-quinone oxidoreductase subunit J, chloroplastic from Aethionema cordifolium (Lebanon stonecress).